The following is a 185-amino-acid chain: Small ribosomal subunit protein uS5 (185 aa).

An S5 DRBM domain is found at 18 to 81 (FVDKLVHINR…ESAKRALIRV (64 aa)).

It belongs to the universal ribosomal protein uS5 family. Part of the 30S ribosomal subunit. Contacts proteins S4 and S8.

With S4 and S12 plays an important role in translational accuracy. Its function is as follows. Located at the back of the 30S subunit body where it stabilizes the conformation of the head with respect to the body. This is Small ribosomal subunit protein uS5 from Azorhizobium caulinodans (strain ATCC 43989 / DSM 5975 / JCM 20966 / LMG 6465 / NBRC 14845 / NCIMB 13405 / ORS 571).